A 595-amino-acid chain; its full sequence is Parathyroid hormone/parathyroid hormone-related peptide receptor (595 aa).

The N-terminal stretch at 1 to 28 (MGAVRIAPGLALLLCCPVLSSAYALVDA) is a signal peptide. Topologically, residues 29–188 (DDVMTKEEQI…REREVFDRLG (160 aa)) are extracellular. Intrachain disulfides connect cysteine 48/cysteine 117, cysteine 108/cysteine 148, and cysteine 131/cysteine 170. Positions 66-103 (DKGWASASTSGKPKKEKASGKLYPESEEDKEVPTGSRH) are disordered. N-linked (GlcNAc...) asparagine glycans are attached at residues asparagine 151, asparagine 161, asparagine 166, and asparagine 176. The chain crosses the membrane as a helical span at residues 189 to 209 (MIYTVGYSVSLASLTVAVLIL). The Cytoplasmic portion of the chain corresponds to 210–223 (AYFRRLHCTRNYIH). The helical transmembrane segment at 224–244 (MHLFLSFMLRAVSIFVKDAVL) threads the bilayer. At 245 to 294 (YSGATLDEAERLTEEELRAIAQAPPPPTAAAGYAGCRVAVTFFLYFLATN) the chain is on the extracellular side. A helical membrane pass occupies residues 295-315 (YYWILVEGLYLHSLIFMAFFS). At 316 to 318 (EKK) the chain is on the cytoplasmic side. Residues 319–339 (YLWGFTVFGWGLPAVFVAVWV) form a helical membrane-spanning segment. Residues 340–360 (SVRATLANTGCWDLSSGNKKW) are Extracellular-facing. A helical membrane pass occupies residues 361-381 (IIQVPILASIVLNFILFINIV). The Cytoplasmic segment spans residues 382 to 404 (RVLATKLRETNAGRCDTRQQYRK). A helical transmembrane segment spans residues 405-425 (LLKSTLVLMPLFGVHYIVFMA). Topologically, residues 426 to 439 (TPYTEVSGTLWQVQ) are extracellular. Residues 440 to 460 (MHYEMLFNSFQGFFVAIIYCF) traverse the membrane as a helical segment. The Cytoplasmic segment spans residues 461-595 (CNGEVQAEIK…LLQEEWETVM (135 aa)). Positions 473–476 (WSRW) match the Important for interaction with G proteins motif. Positions 528–595 (TTTATTNGHP…LLQEEWETVM (68 aa)) are disordered. The segment covering 547-559 (APTLPATPPATAA) has biased composition (low complexity). Threonine 553 carries the post-translational modification Phosphothreonine.

The protein belongs to the G-protein coupled receptor 2 family. As to quaternary structure, homodimer in the absence of bound ligand. Peptide hormone binding leads to dissociation of the homodimer. N-glycosylated. In terms of tissue distribution, high levels in the kidney, with much lower levels in aorta, heart, lung, prostate, testis, and skeletal muscle.

The protein resides in the cell membrane. Its function is as follows. G-protein-coupled receptor for parathyroid hormone (PTH) and for parathyroid hormone-related peptide (PTHLH). Ligand binding causes a conformation change that triggers signaling via guanine nucleotide-binding proteins (G proteins) and modulates the activity of downstream effectors, such as adenylate cyclase (cAMP). PTH1R is coupled to G(s) G alpha proteins and mediates activation of adenylate cyclase activity. PTHLH dissociates from PTH1R more rapidly than PTH; as consequence, the cAMP response induced by PTHLH decays faster than the response induced by PTH. This Canis lupus familiaris (Dog) protein is Parathyroid hormone/parathyroid hormone-related peptide receptor (PTH1R).